The sequence spans 136 residues: Ig kappa chain V-V region MOPC 21 (136 aa).

A signal peptide spans 1–29 (MHQTSMGIKMESHTLVFISILLCLYGADG). The segment at 30–52 (NIVMTQSPKSMSMSVGERVTLTC) is framework-1. The tract at residues 53–63 (KASENVVTYVS) is complementarity-determining-1. Positions 64–78 (WYQQKPEQSPKLLIY) are framework-2. Residues 79–85 (GASNRYT) form a complementarity-determining-2 region. The tract at residues 86 to 117 (GVPDRFTGSGSATDFTLTISSVQAEDLADYHC) is framework-3. Residues 118-126 (GQGYSYPYT) form a complementarity-determining-3 region. The interval 127–136 (FGGGTKLEIK) is framework-4.

This chain is Ig kappa chain V-V region MOPC 21, found in Mus musculus (Mouse).